Here is a 242-residue protein sequence, read N- to C-terminus: Ribonuclease PH (242 aa).

Phosphate-binding positions include arginine 87 and glycine 125–arginine 127.

It belongs to the RNase PH family. As to quaternary structure, homohexameric ring arranged as a trimer of dimers.

The catalysed reaction is tRNA(n+1) + phosphate = tRNA(n) + a ribonucleoside 5'-diphosphate. Phosphorolytic 3'-5' exoribonuclease that plays an important role in tRNA 3'-end maturation. Removes nucleotide residues following the 3'-CCA terminus of tRNAs; can also add nucleotides to the ends of RNA molecules by using nucleoside diphosphates as substrates, but this may not be physiologically important. Probably plays a role in initiation of 16S rRNA degradation (leading to ribosome degradation) during starvation. The polypeptide is Ribonuclease PH (Thermosynechococcus vestitus (strain NIES-2133 / IAM M-273 / BP-1)).